The chain runs to 320 residues: Probable carboxylesterase M8 (320 aa).

The short motif at 52-54 (HGG) is the Involved in the stabilization of the negatively charged intermediate by the formation of the oxyanion hole element. Catalysis depends on residues S137 and H296.

The protein belongs to the 'GDXG' lipolytic enzyme family.

The catalysed reaction is a carboxylic ester + H2O = an alcohol + a carboxylate + H(+). Its pathway is secondary metabolite biosynthesis. Its function is as follows. Probable carboxylesterase; part of the gene cluster that mediates the biosynthesis of squalestatin S1 (SQS1, also known as zaragozic acid A), a heavily oxidized fungal polyketide that offers potent cholesterol lowering activity by targeting squalene synthase (SS). SQS1 is composed of a 2,8-dioxobicyclic[3.2.1]octane-3,4,5-tricarboxyclic acid core that is connected to two lipophilic polyketide arms. These initial steps feature the priming of an unusual benzoic acid starter unit onto the highly reducing polyketide synthase pks2, followed by oxaloacetate extension and product release to generate a tricarboxylic acid containing product. The phenylalanine ammonia lyase (PAL) M7 and the acyl-CoA ligase M9 are involved in transforming phenylalanine into benzoyl-CoA. The citrate synthase-like protein R3 is involved in connecting the C-alpha-carbons of the hexaketide chain and oxaloacetate to afford the tricarboxylic acid unit. The potential hydrolytic enzymes, M8 and M10, are in close proximity to pks2 and may participate in product release. On the other side, the tetraketide arm is synthesized by a the squalestatin tetraketide synthase pks1 and enzymatically esterified to the core in the last biosynthetic step, by the acetyltransferase M4. The biosynthesis of the tetraketide must involve 3 rounds of chain extension. After the first and second rounds methyl-transfer occurs, and in all rounds of extension the ketoreductase and dehydratase are active. The enoyl reductase and C-MeT of pks1 are not active in the final round of extension. The acetyltransferase M4 appears to have a broad substrate selectivity for its acyl CoA substrate, allowing the in vitro synthesis of novel squalestatins. The biosynthesis of SQS1 requires several oxidative steps likely performed by oxidoreductases M1, R1 and R2. Finally, in support of the identification of the cluster as being responsible for SQS1 production, the cluster contains a gene encoding a putative squalene synthase (SS) R6, suggesting a likely mechanism for self-resistance. The chain is Probable carboxylesterase M8 from Phoma sp. (strain ATCC 20986 / MF5453).